Here is a 292-residue protein sequence, read N- to C-terminus: 4-hydroxy-tetrahydrodipicolinate synthase (292 aa).

Position 45 (threonine 45) interacts with pyruvate. Tyrosine 133 acts as the Proton donor/acceptor in catalysis. Residue lysine 162 is the Schiff-base intermediate with substrate of the active site. Isoleucine 204 lines the pyruvate pocket.

The protein belongs to the DapA family. In terms of assembly, homotetramer; dimer of dimers.

It localises to the cytoplasm. It carries out the reaction L-aspartate 4-semialdehyde + pyruvate = (2S,4S)-4-hydroxy-2,3,4,5-tetrahydrodipicolinate + H2O + H(+). It participates in amino-acid biosynthesis; L-lysine biosynthesis via DAP pathway; (S)-tetrahydrodipicolinate from L-aspartate: step 3/4. Functionally, catalyzes the condensation of (S)-aspartate-beta-semialdehyde [(S)-ASA] and pyruvate to 4-hydroxy-tetrahydrodipicolinate (HTPA). The protein is 4-hydroxy-tetrahydrodipicolinate synthase of Nitratidesulfovibrio vulgaris (strain ATCC 29579 / DSM 644 / CCUG 34227 / NCIMB 8303 / VKM B-1760 / Hildenborough) (Desulfovibrio vulgaris).